Consider the following 757-residue polypeptide: Protein Lines homolog 1 (757 aa).

S635 is modified (phosphoserine).

This sequence belongs to the protein lines family. Expressed in adult testis, prostate, prostate, spleen, thymus, skeletal muscle, fetal kidney and brain.

In Homo sapiens (Human), this protein is Protein Lines homolog 1.